A 274-amino-acid chain; its full sequence is 3-deoxy-manno-octulosonate cytidylyltransferase (274 aa).

This sequence belongs to the KdsB family.

It is found in the cytoplasm. The enzyme catalyses 3-deoxy-alpha-D-manno-oct-2-ulosonate + CTP = CMP-3-deoxy-beta-D-manno-octulosonate + diphosphate. Its pathway is nucleotide-sugar biosynthesis; CMP-3-deoxy-D-manno-octulosonate biosynthesis; CMP-3-deoxy-D-manno-octulosonate from 3-deoxy-D-manno-octulosonate and CTP: step 1/1. The protein operates within bacterial outer membrane biogenesis; lipopolysaccharide biosynthesis. In terms of biological role, activates KDO (a required 8-carbon sugar) for incorporation into bacterial lipopolysaccharide in Gram-negative bacteria. The protein is 3-deoxy-manno-octulosonate cytidylyltransferase of Bordetella avium (strain 197N).